A 449-amino-acid polypeptide reads, in one-letter code: 3-phosphoshikimate 1-carboxyvinyltransferase (449 aa).

3-phosphoshikimate is bound by residues K28, S29, and R33. K28 is a binding site for phosphoenolpyruvate. Residues G105 and R133 each coordinate phosphoenolpyruvate. 3-phosphoshikimate contacts are provided by S179, Q181, D332, and K359. Residue Q181 participates in phosphoenolpyruvate binding. D332 acts as the Proton acceptor in catalysis. Phosphoenolpyruvate-binding residues include R363 and R406.

Belongs to the EPSP synthase family. As to quaternary structure, monomer.

The protein localises to the cytoplasm. The enzyme catalyses 3-phosphoshikimate + phosphoenolpyruvate = 5-O-(1-carboxyvinyl)-3-phosphoshikimate + phosphate. It participates in metabolic intermediate biosynthesis; chorismate biosynthesis; chorismate from D-erythrose 4-phosphate and phosphoenolpyruvate: step 6/7. Catalyzes the transfer of the enolpyruvyl moiety of phosphoenolpyruvate (PEP) to the 5-hydroxyl of shikimate-3-phosphate (S3P) to produce enolpyruvyl shikimate-3-phosphate and inorganic phosphate. In Nitrobacter hamburgensis (strain DSM 10229 / NCIMB 13809 / X14), this protein is 3-phosphoshikimate 1-carboxyvinyltransferase.